The sequence spans 1503 residues: ATP-binding cassette sub-family C member 6 (1503 aa).

The Extracellular portion of the chain corresponds to 1-31 (MAAPAEPCAGQGVWNQTEPEPAATSLLSLCF). N-linked (GlcNAc...) asparagine glycosylation is present at asparagine 15. The chain crosses the membrane as a helical span at residues 32–52 (LRTAGVWVPPMYLWVLGPIYL). The Cytoplasmic portion of the chain corresponds to 53–72 (LFIHHHGRGYLRMSPLFKAK). A helical membrane pass occupies residues 73–93 (MVLGFALIVLCTSSVAVALWK). At 94–98 (IQQGT) the chain is on the extracellular side. The chain crosses the membrane as a helical span at residues 99-119 (PEAPEFLIHPTVWLTTMSFAV). At 120-131 (FLIHTERKKGVQ) the chain is on the cytoplasmic side. Residues 132–149 (SSGVLFGYWLLCFVLPAT) form a helical membrane-spanning segment. Over 150-167 (NAAQQASGAGFQSDPVRH) the chain is Extracellular. A helical transmembrane segment spans residues 168-188 (LSTYLCLSLVVAQFVLSCLAD). Residues 189-302 (QPPFFPEDPQ…GSQWRPLLKA (114 aa)) are Cytoplasmic-facing. The helical transmembrane segment at 303 to 323 (IWQVFHSTFLLGTLSLIISDV) threads the bilayer. Positions 311–593 (FLLGTLSLII…LPFSIHSLVQ (283 aa)) constitute an ABC transmembrane type-1 1 domain. Topologically, residues 324-349 (FRFTVPKLLSLFLEFIGDPKPPAWKG) are extracellular. Residues 350–370 (YLLAVLMFLSACLQTLFEQQN) traverse the membrane as a helical segment. Over 371–426 (MYRLKVLQMRLRSAITGLVYRKVLALSSGSRKASAVGDVVNLVSVDVQRLTESVLY) the chain is Cytoplasmic. A helical membrane pass occupies residues 427-447 (LNGLWLPLVWIVVCFVYLWQL). At 448-450 (LGP) the chain is on the extracellular side. Residues 451–471 (SALTAIAVFLSLLPLNFFISK) traverse the membrane as a helical segment. At 472 to 533 (KRNHHQEEQM…ALRTSGLLFS (62 aa)) the chain is on the cytoplasmic side. A helical transmembrane segment spans residues 534–554 (VSLVSFQVSTFLVALVVFAVH). Topologically, residues 555-575 (TLVAENAMNAEKAFVTLTVLN) are extracellular. Residues 576–596 (ILNKAQAFLPFSIHSLVQARV) traverse the membrane as a helical segment. The Cytoplasmic segment spans residues 597 to 939 (SFDRLVTFLC…VKATVHLAYL (343 aa)). The region spanning 629-853 (ITIHSATFAW…KGALMCLLDQ (225 aa)) is the ABC transporter 1 domain. Position 663-670 (663-670 (GPVGAGKS)) interacts with ATP. The segment at 854 to 919 (ARQPGDRGEG…LDDPDRAGWP (66 aa)) is disordered. Basic and acidic residues predominate over residues 881-901 (RRPELRRERSIKSVPEKDRTT). Residues 940–960 (RAVGTPLCLYALFLFLCQQVA) form a helical membrane-spanning segment. In terms of domain architecture, ABC transmembrane type-1 2 spans 947–1228 (CLYALFLFLC…VVRNWTDLEN (282 aa)). The Extracellular segment spans residues 961–997 (SFCRGYWLSLWADDPAVGGQQTQAALRGGIFGLLGCL). The chain crosses the membrane as a helical span at residues 998–1018 (QAIGLFASMAAVLLGGARASR). The Cytoplasmic segment spans residues 1019–1061 (LLFQRLLWDVVRSPISFFERTPIGHLLNRFSKETDTVDVDIPD). Residues 1062–1082 (KLRSLLMYAFGLLEVSLVVAV) traverse the membrane as a helical segment. Position 1083 (alanine 1083) is a topological domain, extracellular. A helical transmembrane segment spans residues 1084-1104 (TPLATVAILPLFLLYAGFQSL). The Cytoplasmic portion of the chain corresponds to 1105 to 1175 (YVVSSCQLRR…VADRWLAANV (71 aa)). Residues 1176 to 1196 (ELLGNGLVFAAATCAVLSKAH) traverse the membrane as a helical segment. At 1197–1198 (LS) the chain is on the extracellular side. Residues 1199-1219 (AGLVGFSVSAALQVTQTLQWV) form a helical membrane-spanning segment. The Cytoplasmic portion of the chain corresponds to 1220–1503 (VRNWTDLENS…YRLAQESGLV (284 aa)). One can recognise an ABC transporter 2 domain in the interval 1265 to 1499 (IEFRDFGLRY…KGLFYRLAQE (235 aa)). Position 1286 is a phosphoserine (serine 1286). Residue 1299 to 1306 (GRTGAGKS) participates in ATP binding.

It belongs to the ABC transporter superfamily. ABCC family. Conjugate transporter (TC 3.A.1.208) subfamily. Requires Mg(2+) as cofactor. In terms of processing, glycosylated. As to expression, expressed in kidney and liver. Very low expression in other tissues. In testis, localized to peritubular myoid cells, Leydig cells, along the basal membrane of Sertoli cells and moderately in the adluminal compartment of the seminiferous tubules.

The protein localises to the basal cell membrane. Its subcellular location is the basolateral cell membrane. It is found in the endoplasmic reticulum membrane. It catalyses the reaction an S-substituted glutathione(in) + ATP + H2O = an S-substituted glutathione(out) + ADP + phosphate + H(+). The enzyme catalyses leukotriene C4(in) + ATP + H2O = leukotriene C4(out) + ADP + phosphate + H(+). With respect to regulation, LTC4 transport is completely inhibited by 1 mM orthovanadate. Its function is as follows. ATP-dependent transporter of the ATP-binding cassette (ABC) family that actively extrudes physiological compounds, and xenobiotics from cells. Mediates ATP-dependent transport of glutathione conjugates such as leukotriene-c4 (LTC4) and N-ethylmaleimide S-glutathione (NEM-GS) (in vitro), and an anionic cyclopentapeptide endothelin antagonist, BQ-123. May contribute to regulate the transport of organic compounds in testes across the blood-testis-barrier. Does not appear to actively transport drugs outside the cell. Confers low levels of cellular resistance to etoposide, teniposide, anthracyclines and cisplatin. Mediates the release of nucleoside triphosphates, predominantly ATP, into the circulation, where it is rapidly converted into AMP and the mineralization inhibitor inorganic pyrophosphate (PPi) by the ecto-enzyme ectonucleotide pyrophosphatase phosphodiesterase 1 (ENPP1), therefore playing a role in PPi homeostasis. Functionally, inhibits TNF-alpha-mediated apoptosis through blocking one or more caspases. This Homo sapiens (Human) protein is ATP-binding cassette sub-family C member 6 (ABCC6).